Consider the following 161-residue polypeptide: Phosphopantetheine adenylyltransferase (161 aa).

Ser11 contributes to the substrate binding site. ATP contacts are provided by residues Ser11–Phe12 and His19. 3 residues coordinate substrate: Lys43, Leu75, and Arg89. Residues Gly90–Arg92, Glu100, and Tyr125–Ser131 each bind ATP.

This sequence belongs to the bacterial CoaD family. Homohexamer. Mg(2+) is required as a cofactor.

The protein localises to the cytoplasm. It catalyses the reaction (R)-4'-phosphopantetheine + ATP + H(+) = 3'-dephospho-CoA + diphosphate. Its pathway is cofactor biosynthesis; coenzyme A biosynthesis; CoA from (R)-pantothenate: step 4/5. In terms of biological role, reversibly transfers an adenylyl group from ATP to 4'-phosphopantetheine, yielding dephospho-CoA (dPCoA) and pyrophosphate. The polypeptide is Phosphopantetheine adenylyltransferase (Staphylococcus saprophyticus subsp. saprophyticus (strain ATCC 15305 / DSM 20229 / NCIMB 8711 / NCTC 7292 / S-41)).